Here is a 235-residue protein sequence, read N- to C-terminus: MNKNVMVKGLTALTILTSLGFAENISNQPHSIAKAEKNVKEITDATKEPYNSVVAFVGGTGVVVGKNTIVTNKHIAKSNDIFKNRVSAHHSSKGKGGGNYDVKDIVEYPGKEDLAIVHVHETSTEGLNFNKNVSYTKFADGAKVKDRISVIGYPKGAQTKYKMFESTGTINHISGTFMEFDAYAQPGNSGSPVLNSKHELIGILYAGSGKDESEKNFGVYFTPQLKEFIQNNIEK.

An N-terminal signal peptide occupies residues 1 to 35 (MNKNVMVKGLTALTILTSLGFAENISNQPHSIAKA). Catalysis depends on charge relay system residues histidine 74, aspartate 113, and serine 189.

It belongs to the peptidase S1B family.

It localises to the secreted. This Staphylococcus aureus (strain USA300) protein is Serine protease SplA (splA).